The primary structure comprises 121 residues: Large ribosomal subunit protein bL20 (121 aa).

The protein belongs to the bacterial ribosomal protein bL20 family.

Its function is as follows. Binds directly to 23S ribosomal RNA and is necessary for the in vitro assembly process of the 50S ribosomal subunit. It is not involved in the protein synthesizing functions of that subunit. The sequence is that of Large ribosomal subunit protein bL20 from Orientia tsutsugamushi (strain Boryong) (Rickettsia tsutsugamushi).